The primary structure comprises 38 residues: Augerpeptide hhe53 (38 aa).

In terms of processing, contains 2 disulfide bonds. Expressed by the venom duct.

The protein localises to the secreted. The polypeptide is Augerpeptide hhe53 (Hastula hectica (Sea snail)).